We begin with the raw amino-acid sequence, 287 residues long: Bifunctional protein FolD (287 aa).

Residues 160–162 (GRS), Ser189, and Ile230 each bind NADP(+).

The protein belongs to the tetrahydrofolate dehydrogenase/cyclohydrolase family. In terms of assembly, homodimer.

The enzyme catalyses (6R)-5,10-methylene-5,6,7,8-tetrahydrofolate + NADP(+) = (6R)-5,10-methenyltetrahydrofolate + NADPH. It catalyses the reaction (6R)-5,10-methenyltetrahydrofolate + H2O = (6R)-10-formyltetrahydrofolate + H(+). The protein operates within one-carbon metabolism; tetrahydrofolate interconversion. Functionally, catalyzes the oxidation of 5,10-methylenetetrahydrofolate to 5,10-methenyltetrahydrofolate and then the hydrolysis of 5,10-methenyltetrahydrofolate to 10-formyltetrahydrofolate. The polypeptide is Bifunctional protein FolD (Chlamydia felis (strain Fe/C-56) (Chlamydophila felis)).